Here is an 89-residue protein sequence, read N- to C-terminus: Small ribosomal subunit protein bS20 (89 aa).

Basic residues predominate over residues 1–12 (MANHKSAIKRHR). Residues 1-26 (MANHKSAIKRHRQSVERAGRNRAART) form a disordered region.

Belongs to the bacterial ribosomal protein bS20 family.

Its function is as follows. Binds directly to 16S ribosomal RNA. This Desulfovibrio desulfuricans (strain ATCC 27774 / DSM 6949 / MB) protein is Small ribosomal subunit protein bS20.